The primary structure comprises 272 residues: 3-methyl-2-oxobutanoate hydroxymethyltransferase (272 aa).

Residues Asp43 and Asp82 each coordinate Mg(2+). 3-methyl-2-oxobutanoate contacts are provided by residues 43–44 (DS), Asp82, and Lys112. Glu114 provides a ligand contact to Mg(2+). Catalysis depends on Glu179, which acts as the Proton acceptor.

The protein belongs to the PanB family. In terms of assembly, homodecamer; pentamer of dimers. Mg(2+) serves as cofactor.

The protein resides in the cytoplasm. The catalysed reaction is 3-methyl-2-oxobutanoate + (6R)-5,10-methylene-5,6,7,8-tetrahydrofolate + H2O = 2-dehydropantoate + (6S)-5,6,7,8-tetrahydrofolate. Its pathway is cofactor biosynthesis; (R)-pantothenate biosynthesis; (R)-pantoate from 3-methyl-2-oxobutanoate: step 1/2. In terms of biological role, catalyzes the reversible reaction in which hydroxymethyl group from 5,10-methylenetetrahydrofolate is transferred onto alpha-ketoisovalerate to form ketopantoate. The protein is 3-methyl-2-oxobutanoate hydroxymethyltransferase of Staphylococcus epidermidis (strain ATCC 35984 / DSM 28319 / BCRC 17069 / CCUG 31568 / BM 3577 / RP62A).